The primary structure comprises 385 residues: S-adenosylmethionine synthase (385 aa).

Residue histidine 16 participates in ATP binding. Mg(2+) is bound at residue aspartate 18. Glutamate 44 contributes to the K(+) binding site. Glutamate 57 and glutamine 100 together coordinate L-methionine. The interval 100 to 110 (QSPDINQGVDR) is flexible loop. Residues 164-166 (DGK), 230-231 (KF), aspartate 239, 245-246 (RK), alanine 262, and lysine 266 each bind ATP. Residue aspartate 239 coordinates L-methionine. Lysine 270 is an L-methionine binding site.

Belongs to the AdoMet synthase family. As to quaternary structure, homotetramer; dimer of dimers. Mg(2+) serves as cofactor. The cofactor is K(+).

It localises to the cytoplasm. It catalyses the reaction L-methionine + ATP + H2O = S-adenosyl-L-methionine + phosphate + diphosphate. It participates in amino-acid biosynthesis; S-adenosyl-L-methionine biosynthesis; S-adenosyl-L-methionine from L-methionine: step 1/1. Its function is as follows. Catalyzes the formation of S-adenosylmethionine (AdoMet) from methionine and ATP. The overall synthetic reaction is composed of two sequential steps, AdoMet formation and the subsequent tripolyphosphate hydrolysis which occurs prior to release of AdoMet from the enzyme. This is S-adenosylmethionine synthase from Helicobacter pylori (strain P12).